Consider the following 741-residue polypeptide: Type VI secretion system spike protein VgrG1b (741 aa).

2 stretches are compositionally biased toward polar residues: residues 614-629 and 649-663; these read SIGA…NETI and GNQS…SRSV. The disordered stretch occupies residues 614-678; it reads SIGANRSESV…TSVGKDDSLD (65 aa).

Belongs to the VgrG protein family.

The protein localises to the secreted. Functionally, part of the H1 type VI secretion system (H1-T6SS) specialized secretion system, which delivers several virulence factors in both prokaryotic and eukaryotic cells during infection. Allows the delivery of the Tse7 toxin to target cells where it exerts toxicity through its nuclease domain. In Pseudomonas aeruginosa (strain ATCC 15692 / DSM 22644 / CIP 104116 / JCM 14847 / LMG 12228 / 1C / PRS 101 / PAO1), this protein is Type VI secretion system spike protein VgrG1b.